Consider the following 122-residue polypeptide: Large ribosomal subunit protein uL18 (122 aa).

Over residues 1-22 (MDKNKKLQSKRLRRRRHVRNKL) the composition is skewed to basic residues. Residues 1-25 (MDKNKKLQSKRLRRRRHVRNKLRGS) form a disordered region.

Belongs to the universal ribosomal protein uL18 family. As to quaternary structure, part of the 50S ribosomal subunit; part of the 5S rRNA/L5/L18/L25 subcomplex. Contacts the 5S and 23S rRNAs.

Functionally, this is one of the proteins that bind and probably mediate the attachment of the 5S RNA into the large ribosomal subunit, where it forms part of the central protuberance. The protein is Large ribosomal subunit protein uL18 of Rhodopirellula baltica (strain DSM 10527 / NCIMB 13988 / SH1).